A 463-amino-acid chain; its full sequence is Ribosomal protein uS12 methylthiotransferase RimO (463 aa).

Residues 1-26 are disordered; the sequence is MPAMSQNPPLLRPDLAPAPIFDTSRR. The segment covering 8-19 has biased composition (low complexity); it reads PPLLRPDLAPAP. Positions 30 to 140 constitute an MTTase N-terminal domain; the sequence is PTIGMVSLGC…VLDAVHHAVP (111 aa). C39, C75, C104, C171, C175, and C178 together coordinate [4Fe-4S] cluster. Positions 157–395 constitute a Radical SAM core domain; that stretch reads LTPRHYSYLK…MQKAQAISEA (239 aa). The TRAM domain occupies 398–463; the sequence is AAKVGHRIEV…AGEYDLWGRL (66 aa).

The protein belongs to the methylthiotransferase family. RimO subfamily. [4Fe-4S] cluster is required as a cofactor.

It localises to the cytoplasm. It catalyses the reaction L-aspartate(89)-[ribosomal protein uS12]-hydrogen + (sulfur carrier)-SH + AH2 + 2 S-adenosyl-L-methionine = 3-methylsulfanyl-L-aspartate(89)-[ribosomal protein uS12]-hydrogen + (sulfur carrier)-H + 5'-deoxyadenosine + L-methionine + A + S-adenosyl-L-homocysteine + 2 H(+). Catalyzes the methylthiolation of an aspartic acid residue of ribosomal protein uS12. The chain is Ribosomal protein uS12 methylthiotransferase RimO from Paracoccus denitrificans (strain Pd 1222).